The chain runs to 426 residues: COMPASS component SWD1 (426 aa).

WD repeat units lie at residues 24-63 (ENPL…PICV), 70-109 (AHVR…KPLK), 212-251 (ITSS…ENSA), 264-307 (INKL…LVRV), and 310-350 (GAEE…KWSA). 2 residues coordinate DNA: Arg-236 and Lys-266.

In terms of assembly, component of the Set1C/COMPASS complex which consists of SET1(2), BRE2(2), SPP1(2), SDC1(1), SHG1(1), SWD1(1), SWD2(1), and SWD3(1).

The protein localises to the nucleus. Its subcellular location is the chromosome. The protein resides in the telomere. Component of the Set1C/COMPASS complex that specifically mono-, di- and trimethylates histone H3 to form H3K4me1/2/3, which subsequently plays a role in telomere length maintenance and transcription elongation regulation. COMPASS recognizes ubiquitinated H2B on one face of the nucleosome which stimulates the methylation of H3 on the opposing face. SWD1/CPS50 acts as an assembly and regulatory hub for COMPASS complex formation. Serves as a highly utilized surface for COMPASS interaction with the nucleosome. This chain is COMPASS component SWD1, found in Saccharomyces cerevisiae (strain ATCC 204508 / S288c) (Baker's yeast).